The following is a 641-amino-acid chain: Threonine--tRNA ligase (641 aa).

In terms of domain architecture, TGS spans 1–61 (MPAITLPDGS…DDDVQLEIVT (61 aa)). A catalytic region spans residues 242–533 (DHRRIGRAQN…LIEHYAGALP (292 aa)). 3 residues coordinate Zn(2+): Cys-333, His-384, and His-510.

Belongs to the class-II aminoacyl-tRNA synthetase family. Homodimer. It depends on Zn(2+) as a cofactor.

It localises to the cytoplasm. It carries out the reaction tRNA(Thr) + L-threonine + ATP = L-threonyl-tRNA(Thr) + AMP + diphosphate + H(+). Catalyzes the attachment of threonine to tRNA(Thr) in a two-step reaction: L-threonine is first activated by ATP to form Thr-AMP and then transferred to the acceptor end of tRNA(Thr). Also edits incorrectly charged L-seryl-tRNA(Thr). In Alkalilimnicola ehrlichii (strain ATCC BAA-1101 / DSM 17681 / MLHE-1), this protein is Threonine--tRNA ligase.